The sequence spans 548 residues: CTP synthase (548 aa).

The amidoligase domain stretch occupies residues 1–265 (MTRYIFVTGG…DDIICDKLRI (265 aa)). Ser13 contributes to the CTP binding site. Residue Ser13 participates in UTP binding. ATP is bound by residues 14–19 (SLGKGI) and Asp71. 2 residues coordinate Mg(2+): Asp71 and Glu139. CTP is bound by residues 146–148 (DIE), 186–191 (KTKPTQ), and Lys222. UTP-binding positions include 186-191 (KTKPTQ) and Lys222. A Glutamine amidotransferase type-1 domain is found at 290–541 (NIAMVGKYME…VNAALAYKAA (252 aa)). Residue Gly351 participates in L-glutamine binding. The Nucleophile; for glutamine hydrolysis role is filled by Cys378. Residues 379-382 (LGMQ), Glu402, and Arg469 contribute to the L-glutamine site. Residues His514 and Glu516 contribute to the active site.

The protein belongs to the CTP synthase family. Homotetramer.

The enzyme catalyses UTP + L-glutamine + ATP + H2O = CTP + L-glutamate + ADP + phosphate + 2 H(+). The catalysed reaction is L-glutamine + H2O = L-glutamate + NH4(+). It carries out the reaction UTP + NH4(+) + ATP = CTP + ADP + phosphate + 2 H(+). The protein operates within pyrimidine metabolism; CTP biosynthesis via de novo pathway; CTP from UDP: step 2/2. Its activity is regulated as follows. Allosterically activated by GTP, when glutamine is the substrate; GTP has no effect on the reaction when ammonia is the substrate. The allosteric effector GTP functions by stabilizing the protein conformation that binds the tetrahedral intermediate(s) formed during glutamine hydrolysis. Inhibited by the product CTP, via allosteric rather than competitive inhibition. Its function is as follows. Catalyzes the ATP-dependent amination of UTP to CTP with either L-glutamine or ammonia as the source of nitrogen. Regulates intracellular CTP levels through interactions with the four ribonucleotide triphosphates. The chain is CTP synthase from Chromohalobacter salexigens (strain ATCC BAA-138 / DSM 3043 / CIP 106854 / NCIMB 13768 / 1H11).